The primary structure comprises 277 residues: 2-dehydro-3-deoxyphosphooctonate aldolase (277 aa).

This sequence belongs to the KdsA family.

The protein localises to the cytoplasm. It catalyses the reaction D-arabinose 5-phosphate + phosphoenolpyruvate + H2O = 3-deoxy-alpha-D-manno-2-octulosonate-8-phosphate + phosphate. It participates in carbohydrate biosynthesis; 3-deoxy-D-manno-octulosonate biosynthesis; 3-deoxy-D-manno-octulosonate from D-ribulose 5-phosphate: step 2/3. It functions in the pathway bacterial outer membrane biogenesis; lipopolysaccharide biosynthesis. The sequence is that of 2-dehydro-3-deoxyphosphooctonate aldolase from Brucella melitensis biotype 2 (strain ATCC 23457).